The following is a 292-amino-acid chain: Rhodanese-like domain-containing protein 11, chloroplastic (292 aa).

The transit peptide at 1 to 56 (MESLSLPVLNPLLASGSNLFRNQHSRMTSSMVSSLKSPIGGTSLSTVRRFGVGVVR) directs the protein to the chloroplast. Positions 101 to 224 (SLSNKPLLDV…AQDEDLVTEG (124 aa)) constitute a Rhodanese domain. Cysteine 184 functions as the Cysteine persulfide intermediate in the catalytic mechanism.

It localises to the plastid. The protein resides in the chloroplast. In Arabidopsis thaliana (Mouse-ear cress), this protein is Rhodanese-like domain-containing protein 11, chloroplastic (STR11).